Reading from the N-terminus, the 334-residue chain is Probable 3-hydroxyisobutyrate dehydrogenase-like 1, mitochondrial (334 aa).

Residues 1 to 23 (MPLLLRRFPSPSVVSSFFLRRSM) constitute a mitochondrion transit peptide. A24 bears the N-acetylalanine mark. NAD(+)-binding positions include 38-67 (TKIGWIGTGVMGRSMCGHLIKAGYTVTVFN) and T133. K207 is an active-site residue. Position 275 (K275) interacts with NAD(+).

Belongs to the HIBADH-related family. 3-hydroxyisobutyrate dehydrogenase subfamily.

The protein resides in the mitochondrion. The catalysed reaction is 3-hydroxy-2-methylpropanoate + NAD(+) = 2-methyl-3-oxopropanoate + NADH + H(+). It functions in the pathway amino-acid degradation; L-valine degradation. This is Probable 3-hydroxyisobutyrate dehydrogenase-like 1, mitochondrial from Arabidopsis thaliana (Mouse-ear cress).